Reading from the N-terminus, the 301-residue chain is Methionyl-tRNA formyltransferase (301 aa).

109 to 112 (SILP) contributes to the (6S)-5,6,7,8-tetrahydrofolate binding site.

This sequence belongs to the Fmt family.

The enzyme catalyses L-methionyl-tRNA(fMet) + (6R)-10-formyltetrahydrofolate = N-formyl-L-methionyl-tRNA(fMet) + (6S)-5,6,7,8-tetrahydrofolate + H(+). Functionally, attaches a formyl group to the free amino group of methionyl-tRNA(fMet). The formyl group appears to play a dual role in the initiator identity of N-formylmethionyl-tRNA by promoting its recognition by IF2 and preventing the misappropriation of this tRNA by the elongation apparatus. In Campylobacter curvus (strain 525.92), this protein is Methionyl-tRNA formyltransferase.